A 160-amino-acid polypeptide reads, in one-letter code: Peptide deformylase 1 (160 aa).

Fe cation contacts are provided by C90 and H132. Residue E133 is part of the active site. Position 136 (H136) interacts with Fe cation.

It belongs to the polypeptide deformylase family. It depends on Fe(2+) as a cofactor.

It catalyses the reaction N-terminal N-formyl-L-methionyl-[peptide] + H2O = N-terminal L-methionyl-[peptide] + formate. Removes the formyl group from the N-terminal Met of newly synthesized proteins. Requires at least a dipeptide for an efficient rate of reaction. N-terminal L-methionine is a prerequisite for activity but the enzyme has broad specificity at other positions. This is Peptide deformylase 1 (defA) from Bacillus subtilis (strain 168).